Consider the following 475-residue polypeptide: Pentatricopeptide repeat-containing protein At1g29710, mitochondrial (475 aa).

Residues 1-37 (MVRLWCGKLRLWKPYLALATQSRNSWFCSGGGAPSHH) constitute a mitochondrion transit peptide. PPR repeat units follow at residues 83–117 (AQNV…GYAM), 118–148 (DLIR…IIAL), 153–183 (DVGA…MPEW), 184–218 (NSGT…GNKP), 219–254 (NGEI…GIVP), and 255–285 (SMEH…MPME). The interval 350 to 380 (YFYSTFRPVDSSHPQMNIIYETLMSLRSQLK) is type E(+) motif. Positions 381–475 (EMGYVPDTRY…NGVCRCNNLW (95 aa)) are type DYW motif.

This sequence belongs to the PPR family. PCMP-H subfamily.

It is found in the mitochondrion. This Arabidopsis thaliana (Mouse-ear cress) protein is Pentatricopeptide repeat-containing protein At1g29710, mitochondrial (PCMP-H67).